Reading from the N-terminus, the 157-residue chain is 2-C-methyl-D-erythritol 2,4-cyclodiphosphate synthase (157 aa).

Asp8 and His10 together coordinate a divalent metal cation. 4-CDP-2-C-methyl-D-erythritol 2-phosphate-binding positions include 8 to 10 (DVH) and 34 to 35 (HS). His42 serves as a coordination point for a divalent metal cation. 4-CDP-2-C-methyl-D-erythritol 2-phosphate is bound by residues 56 to 58 (DIG), 132 to 135 (TTNE), and Arg142.

Belongs to the IspF family. As to quaternary structure, homotrimer. Requires a divalent metal cation as cofactor.

The catalysed reaction is 4-CDP-2-C-methyl-D-erythritol 2-phosphate = 2-C-methyl-D-erythritol 2,4-cyclic diphosphate + CMP. It participates in isoprenoid biosynthesis; isopentenyl diphosphate biosynthesis via DXP pathway; isopentenyl diphosphate from 1-deoxy-D-xylulose 5-phosphate: step 4/6. Functionally, involved in the biosynthesis of isopentenyl diphosphate (IPP) and dimethylallyl diphosphate (DMAPP), two major building blocks of isoprenoid compounds. Catalyzes the conversion of 4-diphosphocytidyl-2-C-methyl-D-erythritol 2-phosphate (CDP-ME2P) to 2-C-methyl-D-erythritol 2,4-cyclodiphosphate (ME-CPP) with a corresponding release of cytidine 5-monophosphate (CMP). The chain is 2-C-methyl-D-erythritol 2,4-cyclodiphosphate synthase from Prosthecochloris aestuarii (strain DSM 271 / SK 413).